We begin with the raw amino-acid sequence, 556 residues long: U3 small nucleolar RNA-associated protein 18 homolog (556 aa).

Basic residues predominate over residues 1–24; the sequence is MPPERRRRMKLDRRTGAKPKRKPG. Residues 1 to 70 form a disordered region; it reads MPPERRRRMK…IAVAAAEEER (70 aa). The segment covering 43 to 65 has biased composition (low complexity); the sequence is APSSQRKPPARPSAAAAAIAVAA. Lysine 84 is covalently cross-linked (Glycyl lysine isopeptide (Lys-Gly) (interchain with G-Cter in SUMO2)). A disordered region spans residues 111–143; that stretch reads RGPRVQEHEDSGDSEVENEAKGNFPPQKKPVWV. Phosphoserine occurs at positions 121 and 124. Residues lysine 183 and lysine 201 each participate in a glycyl lysine isopeptide (Lys-Gly) (interchain with G-Cter in SUMO2) cross-link. A disordered region spans residues 193–219; the sequence is VPAWAETTKRKTSSDDESEEDEDDLLQ. Threonine 204 is subject to Phosphothreonine. Serine 205, serine 206, and serine 210 each carry phosphoserine. A compositionally biased stretch (acidic residues) spans 207-216; the sequence is DDESEEDEDD. Position 221 is a phosphothreonine (threonine 221). 6 WD repeats span residues 249–288, 293–333, 339–380, 381–419, 421–462, and 471–512; these read PTVA…NPKI, LERF…LIPV, LKEK…GSMK, INGR…CLNR, VDEG…QETN, and NLVT…VFSN. Lysine 517 is covalently cross-linked (Glycyl lysine isopeptide (Lys-Gly) (interchain with G-Cter in SUMO2)).

It belongs to the WD repeat UTP18 family. As to quaternary structure, part of the small subunit (SSU) processome, composed of more than 70 proteins and the RNA chaperone small nucleolar RNA (snoRNA) U3.

It localises to the nucleus. The protein resides in the nucleolus. In terms of biological role, part of the small subunit (SSU) processome, first precursor of the small eukaryotic ribosomal subunit. During the assembly of the SSU processome in the nucleolus, many ribosome biogenesis factors, an RNA chaperone and ribosomal proteins associate with the nascent pre-rRNA and work in concert to generate RNA folding, modifications, rearrangements and cleavage as well as targeted degradation of pre-ribosomal RNA by the RNA exosome. Involved in nucleolar processing of pre-18S ribosomal RNA. The polypeptide is U3 small nucleolar RNA-associated protein 18 homolog (Homo sapiens (Human)).